The following is a 709-amino-acid chain: Polyribonucleotide nucleotidyltransferase (709 aa).

Residues D485 and D491 each contribute to the Mg(2+) site. Positions 552–611 (PRIHTMKIDPKKIKDVIGKGGATIRALTEETGTSIDIDDDGTVKIAATDNNAAKRVMERI) constitute a KH domain. Residues 621-689 (NAIYKGKVTR…RQGRIRLTMK (69 aa)) form the S1 motif domain.

This sequence belongs to the polyribonucleotide nucleotidyltransferase family. In terms of assembly, component of the RNA degradosome, which is a multiprotein complex involved in RNA processing and mRNA degradation. Mg(2+) serves as cofactor.

The protein localises to the cytoplasm. The enzyme catalyses RNA(n+1) + phosphate = RNA(n) + a ribonucleoside 5'-diphosphate. Its function is as follows. Involved in mRNA degradation. Catalyzes the phosphorolysis of single-stranded polyribonucleotides processively in the 3'- to 5'-direction. The sequence is that of Polyribonucleotide nucleotidyltransferase from Glaesserella parasuis serovar 5 (strain SH0165) (Haemophilus parasuis).